A 256-amino-acid polypeptide reads, in one-letter code: Polycomb group RING finger protein 5 (256 aa).

The RING-type zinc-finger motif lies at 18 to 57; sequence CYICKGYLIKPTTVTECLHTFCKTCIVQHFEDSNDCPRCG. 2 stretches are compositionally biased toward basic and acidic residues: residues 94 to 103 and 110 to 120; these read ESEFWKKNKP and DTSKADKPKVD. Positions 94 to 133 are disordered; sequence ESEFWKKNKPQENGQDDTSKADKPKVDEEGDENEDDKDYH.

Component of a PRC1-like complex that contains PCGF5, RNF2 and UBE2D3. Interacts with RNF2; the interaction is direct. Interacts with CBX6, CBX7 and CBX8. Interacts with AUTS2; the interaction is direct. Identified in a complex that contains AUTS2, PCGF5, CSNK2B and RNF2.

It is found in the nucleus. It localises to the nucleoplasm. Component of a Polycomb group (PcG) multiprotein PRC1-like complex, a complex class required to maintain the transcriptionally repressive state of many genes, including Hox genes, throughout development. PcG PRC1 complex acts via chromatin remodeling and modification of histones; it mediates monoubiquitination of histone H2A 'Lys-119', rendering chromatin heritably changed in its expressibility. Within the PRC1-like complex, regulates RNF2 ubiquitin ligase activity. Plays a redundant role with PCGF3 as part of a PRC1-like complex that mediates monoubiquitination of histone H2A 'Lys-119' on the X chromosome and is required for normal silencing of one copy of the X chromosome in XX females. This chain is Polycomb group RING finger protein 5 (PCGF5), found in Homo sapiens (Human).